A 168-amino-acid chain; its full sequence is Heat shock protein beta-9 (168 aa).

A compositionally biased stretch (polar residues) spans 1–12 (MQRVGSSFSTGQ). Disordered stretches follow at residues 1–25 (MQRVGSSFSTGQREPGENRVASRCP), 83–104 (TGQRQHESNDPSRGRYRMEQSV), and 129–168 (LWLRGQNKCLPPPEAQTGQSQKPRRGGPKSSLQNESVKNP). Positions 38–151 (LPVRLLRDEV…EAQTGQSQKP (114 aa)) constitute a sHSP domain. Residues 86–104 (RQHESNDPSRGRYRMEQSV) are compositionally biased toward basic and acidic residues. Positions 158–168 (SSLQNESVKNP) are enriched in polar residues.

The protein belongs to the small heat shock protein (HSP20) family. In terms of tissue distribution, testis specific.

The protein localises to the cytoplasm. It localises to the nucleus. This chain is Heat shock protein beta-9 (Hspb9), found in Mus musculus (Mouse).